A 572-amino-acid chain; its full sequence is Phenylalanine--tRNA ligase beta subunit (572 aa).

Residues 285–363 enclose the B5 domain; that stretch reads LSTTTKTVSH…RAFGFNELEP (79 aa). Residues Asp341, Asp347, Asp350, and Asp351 each coordinate Mg(2+).

This sequence belongs to the phenylalanyl-tRNA synthetase beta subunit family. Type 2 subfamily. In terms of assembly, tetramer of two alpha and two beta subunits. Requires Mg(2+) as cofactor.

It localises to the cytoplasm. The catalysed reaction is tRNA(Phe) + L-phenylalanine + ATP = L-phenylalanyl-tRNA(Phe) + AMP + diphosphate + H(+). The polypeptide is Phenylalanine--tRNA ligase beta subunit (Natronomonas pharaonis (strain ATCC 35678 / DSM 2160 / CIP 103997 / JCM 8858 / NBRC 14720 / NCIMB 2260 / Gabara) (Halobacterium pharaonis)).